A 251-amino-acid chain; its full sequence is MHILIANDDGYLAPGLAALHRALSPLGRVTVVAPEQNHSGASNSLTLQRPLSVFEATDGAQKGFRFVNGTPTDCVHIALTGMIEEKPDLVVSGINQGQNMGEDVLYSGTVAAAIEGYLFGIPSIAFSQADKGWAHLDAAERVAREVVERYLSDPLDGPVLLNVNIPNLPYAELAGWRATRLGKRHQSQPVIRQANPRGEPIFWVGAAGDAKDASEGTDFHAVAHGFVSLTPLQLDLTDTAQLRTVRRWQTP.

Aspartate 8, aspartate 9, serine 39, and asparagine 95 together coordinate a divalent metal cation.

This sequence belongs to the SurE nucleotidase family. The cofactor is a divalent metal cation.

The protein localises to the cytoplasm. The catalysed reaction is a ribonucleoside 5'-phosphate + H2O = a ribonucleoside + phosphate. In terms of biological role, nucleotidase that shows phosphatase activity on nucleoside 5'-monophosphates. This chain is 5'-nucleotidase SurE, found in Ralstonia pickettii (strain 12J).